We begin with the raw amino-acid sequence, 771 residues long: U3 small nucleolar RNA-associated protein 14 homolog A (771 aa).

Residues Pro-23–Ala-49 form a disordered region. Ser-29, Ser-31, Ser-52, Ser-77, and Ser-81 each carry phosphoserine. Residues Glu-40–Ala-67 are a coiled coil. A Glycyl lysine isopeptide (Lys-Gly) (interchain with G-Cter in SUMO2) cross-link involves residue Lys-122. Position 205 is a phosphothreonine (Thr-205). Coiled coils occupy residues Ser-216 to Arg-290 and Leu-317 to Glu-347. Disordered stretches follow at residues Thr-334 to Glu-355 and Met-367 to Gln-557. Acidic residues predominate over residues Glu-342 to Glu-355. The span at Leu-399–Leu-436 shows a compositional bias: basic and acidic residues. 2 positions are modified to phosphoserine: Ser-405 and Ser-407. At Arg-433 the chain carries Citrulline. Ser-437 and Ser-445 each carry phosphoserine. Lys-449 participates in a covalent cross-link: Glycyl lysine isopeptide (Lys-Gly) (interchain with G-Cter in SUMO2). Ser-453 bears the Phosphoserine mark. Over residues Arg-504–Pro-529 the composition is skewed to basic and acidic residues. Lys-519 participates in a covalent cross-link: Glycyl lysine isopeptide (Lys-Gly) (interchain with G-Cter in SUMO2). Over residues Gly-535 to Asn-544 the composition is skewed to polar residues. Residues Asp-547–Gln-557 are compositionally biased toward basic and acidic residues. Residue Ser-569 is modified to Phosphoserine. Arg-589 is modified (citrulline). Lys-733 participates in a covalent cross-link: Glycyl lysine isopeptide (Lys-Gly) (interchain with G-Cter in SUMO2). The span at Arg-740 to Gln-751 shows a compositional bias: polar residues. The disordered stretch occupies residues Arg-740–Asp-771. A compositionally biased stretch (basic residues) spans Asn-753 to Asp-771.

Belongs to the UTP14 family. Interacts with DHX37. In terms of processing, citrullinated by PADI4. Ubiquitously expressed.

It is found in the nucleus. Its subcellular location is the nucleolus. May be required for ribosome biogenesis. The protein is U3 small nucleolar RNA-associated protein 14 homolog A (UTP14A) of Homo sapiens (Human).